A 212-amino-acid chain; its full sequence is Redox-sensing transcriptional repressor Rex (212 aa).

The segment at residues 17 to 56 (KYHRYLQELMENDIDRISSKELSEKIGFTASQIRQDLNCF) is a DNA-binding region (H-T-H motif). 91–96 (GAGNIG) is an NAD(+) binding site.

It belongs to the transcriptional regulatory Rex family. Homodimer.

It localises to the cytoplasm. Functionally, modulates transcription in response to changes in cellular NADH/NAD(+) redox state. This chain is Redox-sensing transcriptional repressor Rex, found in Clostridium perfringens (strain SM101 / Type A).